The sequence spans 212 residues: Protein-L-isoaspartate O-methyltransferase (212 aa).

Ser60 is a catalytic residue.

This sequence belongs to the methyltransferase superfamily. L-isoaspartyl/D-aspartyl protein methyltransferase family.

The protein localises to the cytoplasm. It carries out the reaction [protein]-L-isoaspartate + S-adenosyl-L-methionine = [protein]-L-isoaspartate alpha-methyl ester + S-adenosyl-L-homocysteine. Catalyzes the methyl esterification of L-isoaspartyl residues in peptides and proteins that result from spontaneous decomposition of normal L-aspartyl and L-asparaginyl residues. It plays a role in the repair and/or degradation of damaged proteins. The protein is Protein-L-isoaspartate O-methyltransferase of Pseudomonas putida (strain ATCC 700007 / DSM 6899 / JCM 31910 / BCRC 17059 / LMG 24140 / F1).